We begin with the raw amino-acid sequence, 250 residues long: 2,3-bisphosphoglycerate-dependent phosphoglycerate mutase (250 aa).

Residues R10–N17, T23–G24, R62, E89–Y92, K100, R116–R117, and G185–N186 each bind substrate. H11 serves as the catalytic Tele-phosphohistidine intermediate. Residue E89 is the Proton donor/acceptor of the active site.

This sequence belongs to the phosphoglycerate mutase family. BPG-dependent PGAM subfamily. In terms of assembly, homodimer.

The enzyme catalyses (2R)-2-phosphoglycerate = (2R)-3-phosphoglycerate. It functions in the pathway carbohydrate degradation; glycolysis; pyruvate from D-glyceraldehyde 3-phosphate: step 3/5. In terms of biological role, catalyzes the interconversion of 2-phosphoglycerate and 3-phosphoglycerate. The polypeptide is 2,3-bisphosphoglycerate-dependent phosphoglycerate mutase (Citrobacter koseri (strain ATCC BAA-895 / CDC 4225-83 / SGSC4696)).